The following is a 395-amino-acid chain: F-box protein At5g46170 (395 aa).

In terms of domain architecture, F-box spans 24–72 (IDHFDHLPDSILLLVFNKIGDVKALGRCCVVSRRFHSLVPQVDNVVVRV). Residues 122–158 (TKRSSSSCGGSGSSSSSLSISGDDDGGEIEQGGVTHH) are disordered. Low complexity predominate over residues 125-142 (SSSSCGGSGSSSSSLSIS).

The sequence is that of F-box protein At5g46170 from Arabidopsis thaliana (Mouse-ear cress).